A 232-amino-acid chain; its full sequence is UPF0758 protein Amet_2289 (232 aa).

In terms of domain architecture, MPN spans 110–232; the sequence is RIKSPDDVSN…YYSLKEKSMM (123 aa). Histidine 181, histidine 183, and aspartate 194 together coordinate Zn(2+). The short motif at 181–194 is the JAMM motif element; that stretch reads HNHPSGDPSPSGED.

It belongs to the UPF0758 family.

The polypeptide is UPF0758 protein Amet_2289 (Alkaliphilus metalliredigens (strain QYMF)).